The following is a 497-amino-acid chain: Cytochrome P450 71A20 (497 aa).

Residues 3-23 (MILITLCLTTLLALLLKSILK) traverse the membrane as a helical segment. C440 contributes to the heme binding site.

The protein belongs to the cytochrome P450 family. Heme is required as a cofactor.

The protein localises to the membrane. In Arabidopsis thaliana (Mouse-ear cress), this protein is Cytochrome P450 71A20 (CYP71A20).